The following is a 420-amino-acid chain: MSNVRYISNLTRETYALILAGGRGSRLHELTDWRAKPALYFGGKFRIIDFPLSNCINSGIRRVGVVTQYKSHSLIRHVMRGWGHFKKELGESVEILPASQRYSENWYQGTADAVFQNIDIIRHELPKYVMVLSGDHVYRMDYAGLLAAHAESGADMTVSCLEVPVAEAAGAFGVMEVDDEMRILGFEEKPKHPKHSPGNPEKCLASMGNYVFNTEFLFEQLKKDAQNANSDRDFGKDIIPSIIEKHKVFAYPFKSAFPNEQAYWRDVGTLDSFWQANMELLSPTPALNLYDAKWPIWTYQEQLPPAKFVFDDDDRRGMAVDSIISGGCIISGATVRRSVLFNEVRVCSYSVVEDSVVLPDVVVLRHCKIKNAIIDRGCIIPEGTVIGYNHDHDRAKGFRVSEKGITLVTRDMLGLPVGYE.

Alpha-D-glucose 1-phosphate contacts are provided by residues Tyr-107, Gly-173, 188 to 189, and Ser-206; that span reads EK.

It belongs to the bacterial/plant glucose-1-phosphate adenylyltransferase family. In terms of assembly, homotetramer.

The catalysed reaction is alpha-D-glucose 1-phosphate + ATP + H(+) = ADP-alpha-D-glucose + diphosphate. Its pathway is glycan biosynthesis; glycogen biosynthesis. Functionally, involved in the biosynthesis of ADP-glucose, a building block required for the elongation reactions to produce glycogen. Catalyzes the reaction between ATP and alpha-D-glucose 1-phosphate (G1P) to produce pyrophosphate and ADP-Glc. The sequence is that of Glucose-1-phosphate adenylyltransferase from Shewanella sp. (strain ANA-3).